Reading from the N-terminus, the 406-residue chain is Dual-specificity RNA methyltransferase RlmN (406 aa).

Catalysis depends on E119, which acts as the Proton acceptor. The 246-residue stretch at 125 to 370 (DKGRGTLCVS…AMVRRTRGDD (246 aa)) folds into the Radical SAM core domain. Cysteines 132 and 375 form a disulfide. [4Fe-4S] cluster is bound by residues C139, C143, and C146. Residues 192 to 193 (GE), S224, 246 to 248 (SLH), and N332 each bind S-adenosyl-L-methionine. C375 (S-methylcysteine intermediate) is an active-site residue.

Belongs to the radical SAM superfamily. RlmN family. [4Fe-4S] cluster serves as cofactor.

It is found in the cytoplasm. The enzyme catalyses adenosine(2503) in 23S rRNA + 2 reduced [2Fe-2S]-[ferredoxin] + 2 S-adenosyl-L-methionine = 2-methyladenosine(2503) in 23S rRNA + 5'-deoxyadenosine + L-methionine + 2 oxidized [2Fe-2S]-[ferredoxin] + S-adenosyl-L-homocysteine. It carries out the reaction adenosine(37) in tRNA + 2 reduced [2Fe-2S]-[ferredoxin] + 2 S-adenosyl-L-methionine = 2-methyladenosine(37) in tRNA + 5'-deoxyadenosine + L-methionine + 2 oxidized [2Fe-2S]-[ferredoxin] + S-adenosyl-L-homocysteine. Its function is as follows. Specifically methylates position 2 of adenine 2503 in 23S rRNA and position 2 of adenine 37 in tRNAs. m2A2503 modification seems to play a crucial role in the proofreading step occurring at the peptidyl transferase center and thus would serve to optimize ribosomal fidelity. The protein is Dual-specificity RNA methyltransferase RlmN of Xylella fastidiosa (strain M12).